Consider the following 417-residue polypeptide: Serine hydroxymethyltransferase (417 aa).

Residues Leu-121 and 125 to 127 (GHL) each bind (6S)-5,6,7,8-tetrahydrofolate. The residue at position 229 (Lys-229) is an N6-(pyridoxal phosphate)lysine. A (6S)-5,6,7,8-tetrahydrofolate-binding site is contributed by 355–357 (SPF).

Belongs to the SHMT family. Homodimer. Pyridoxal 5'-phosphate serves as cofactor.

It is found in the cytoplasm. It carries out the reaction (6R)-5,10-methylene-5,6,7,8-tetrahydrofolate + glycine + H2O = (6S)-5,6,7,8-tetrahydrofolate + L-serine. It participates in one-carbon metabolism; tetrahydrofolate interconversion. Its pathway is amino-acid biosynthesis; glycine biosynthesis; glycine from L-serine: step 1/1. In terms of biological role, catalyzes the reversible interconversion of serine and glycine with tetrahydrofolate (THF) serving as the one-carbon carrier. This reaction serves as the major source of one-carbon groups required for the biosynthesis of purines, thymidylate, methionine, and other important biomolecules. Also exhibits THF-independent aldolase activity toward beta-hydroxyamino acids, producing glycine and aldehydes, via a retro-aldol mechanism. The protein is Serine hydroxymethyltransferase of Buchnera aphidicola subsp. Acyrthosiphon pisum (strain 5A).